Here is a 263-residue protein sequence, read N- to C-terminus: Shikimate dehydrogenase (NADP(+)) (263 aa).

Shikimate is bound by residues 16–18 and T65; that span reads SKS. The active-site Proton acceptor is the K69. Residues N90 and D105 each coordinate shikimate. Residues 125-129 and L208 contribute to the NADP(+) site; that span reads GSGGS. Residue Y210 coordinates shikimate. NADP(+) is bound at residue G230.

Belongs to the shikimate dehydrogenase family. Homodimer.

It carries out the reaction shikimate + NADP(+) = 3-dehydroshikimate + NADPH + H(+). It participates in metabolic intermediate biosynthesis; chorismate biosynthesis; chorismate from D-erythrose 4-phosphate and phosphoenolpyruvate: step 4/7. Its function is as follows. Involved in the biosynthesis of the chorismate, which leads to the biosynthesis of aromatic amino acids. Catalyzes the reversible NADPH linked reduction of 3-dehydroshikimate (DHSA) to yield shikimate (SA). In Helicobacter pylori (strain G27), this protein is Shikimate dehydrogenase (NADP(+)).